The primary structure comprises 603 residues: Probable L-gulonolactone oxidase 6 (603 aa).

The signal sequence occupies residues 1–35; the sequence is MAFTSSPSYGSLNAAFWRTIFVVHCISTLVFTTIS. In terms of domain architecture, FAD-binding PCMH-type spans 64–246; it reads STCRAANVAY…SQVTLKLQPM (183 aa).

This sequence belongs to the oxygen-dependent FAD-linked oxidoreductase family. It depends on FAD as a cofactor.

It carries out the reaction L-gulono-1,4-lactone + O2 = L-ascorbate + H2O2 + H(+). Its pathway is cofactor biosynthesis; L-ascorbate biosynthesis. Its function is as follows. May be involved in the biosynthesis of ascorbic acid. The chain is Probable L-gulonolactone oxidase 6 from Arabidopsis thaliana (Mouse-ear cress).